The chain runs to 476 residues: ATP synthase subunit beta, mitochondrial (476 aa).

Residue 156 to 163 (GAGVGKTV) coordinates ATP.

In terms of assembly, F-type ATP synthases have 2 components, the catalytic core F(1) and the membrane-embedded component F(0), linked together by a central stalk and a peripheral stalk. The central stalk, also called rotor shaft, is often seen as part of F(1). The peripheral stalk is seen as part of F(0). F(0) contains the membrane channel next to the rotor. F-type ATP synthases form dimers but each monomer functions independently in ATP generation. The dimer consists of 18 different polypeptides: ATP1 (subunit alpha, part of F(1), 3 molecules per monomer), ATP2 (subunit beta, part of F(1), 3 molecules per monomer), ATP3 (subunit gamma, part of the central stalk), ATP4 (subunit b, part of the peripheral stalk), ATP5/OSCP (subunit 5/OSCP, part of the peripheral stalk), ATP6 (subunit a, part of the peripheral stalk), ATP7 (subunit d, part of the peripheral stalk), ATP8 (subunit 8, part of the peripheral stalk), OLI1 (subunit c, part of the rotor, 10 molecules per monomer), ATP14 (subunit h, part of the peripheral stalk), ATP15 (subunit epsilon, part of the central stalk), ATP16 (subunit delta, part of the central stalk), ATP17 (subunit f, part of the peripheral stalk), ATP18 (subunit i/j, part of the peripheral stalk). Dimer-specific subunits are ATP19 (subunit k, at interface between monomers), ATP20 (subunit g, at interface between monomers), TIM11 (subunit e, at interface between monomers). Also contains subunit L.

It localises to the mitochondrion inner membrane. It carries out the reaction ATP + H2O + 4 H(+)(in) = ADP + phosphate + 5 H(+)(out). Mitochondrial membrane ATP synthase (F(1)F(0) ATP synthase or Complex V) produces ATP from ADP in the presence of a proton gradient across the membrane which is generated by electron transport complexes of the respiratory chain. F-type ATP synthases consist of two structural domains, F(1) - containing the extramembraneous catalytic core, and F(0) - containing the membrane proton channel, linked together by a central stalk and a peripheral stalk. During catalysis, ATP synthesis in the catalytic domain of F(1) is coupled via a rotary mechanism of the central stalk subunits to proton translocation. Subunits alpha/ATP1 and beta/ATP2 form the catalytic core in F(1). Rotation of the central stalk against the surrounding alpha/ATP1(3)beta/ATP2(3) subunits leads to hydrolysis of ATP in three separate catalytic sites on the beta/ATP2 subunits. The sequence is that of ATP synthase subunit beta, mitochondrial from Pichia angusta (Yeast).